Here is a 319-residue protein sequence, read N- to C-terminus: mRNA decay activator protein ZFP36 (319 aa).

The segment at 1-15 is necessary for nuclear export; it reads MDLSAIYESLQSMSH. A necessary and sufficient for the association with mRNA decay enzymes and mRNA decay activation region spans residues 1–92; sequence MDLSAIYESL…PTSPTATPTT (92 aa). 2 necessary for localization of ARE-containing mRNAs to processing bodies (PBs) regions span residues 1–166 and 92–319; these read MDLS…DLAL and TSSR…SVSE. A Phosphoserine; by MAPKAPK2 modification is found at Ser52. Ser58 carries the phosphoserine modification. One copy of the P-P-P-P-G repeat lies at 63-67; the sequence is PPPPG. Residues 65 to 84 are compositionally biased toward pro residues; that stretch reads PPGFAPLAPRPGPELSPSPT. A disordered region spans residues 65-95; the sequence is PPGFAPLAPRPGPELSPSPTSPTATPTTSSR. Ser80 and Ser82 each carry phosphoserine. Thr84 carries the phosphothreonine modification. Ser85 carries the post-translational modification Phosphoserine. Residues 85 to 94 are compositionally biased toward low complexity; sequence SPTATPTTSS. The segment at 87–160 is necessary for nuclear localization; that stretch reads TATPTTSSRY…GSRCHFIHNP (74 aa). The necessary for RNA-binding stretch occupies residues 89 to 165; the sequence is TPTTSSRYKT…FIHNPTEDLA (77 aa). C3H1-type zinc fingers lie at residues 95–123 and 133–161; these read RYKTELCRTYSESGRCRYGAKCQFAHGLG and KYKTELCHKFYLQGRCPYGSRCHFIHNPT. Residues 95 to 186 are necessary for interaction with PABPN1; that stretch reads RYKTELCRTY…ISFSGLPSGR (92 aa). Residues 166-319 are necessary for mRNA decay activation; the sequence is LPGQPHVLRQ…PIFNRISVSE (154 aa). At Ser178 the chain carries Phosphoserine; by MAPKAPK2. The segment covering 179–188 has biased composition (low complexity); sequence FSGLPSGRRS. A disordered region spans residues 179–309; sequence FSGLPSGRRS…PQTPAPPRRL (131 aa). At Ser189 the chain carries Phosphoserine. One copy of the P-P-P-P-G repeat lies at 190 to 194; that stretch reads PPPPG. Residues 196 to 208 show a composition bias toward low complexity; that stretch reads SGPSLSSCSFSPS. Ser210 is modified (phosphoserine). Residues 211–215 form a P-P-P-P-G repeat; the sequence is PPPPG. Phosphoserine; by MAPK1; in vitro is present on Ser220. Thr250 is subject to Phosphothreonine. Phosphoserine occurs at positions 269, 289, and 316. Residues 279 to 289 show a composition bias toward low complexity; sequence SSGSSLGGSDS. Residues 305-319 are interaction with CNOT1; it reads PPRRLPIFNRISVSE.

As to quaternary structure, associates with cytoplasmic CCR4-NOT and PAN2-PAN3 deadenylase complexes to trigger ARE-containing mRNA deadenylation and decay processes. Part of a mRNA decay activation complex at least composed of poly(A)-specific exoribonucleases CNOT6, EXOSC2 and XRN1 and mRNA-decapping enzymes DCP1A and DCP2. Associates with the RNA exosome complex. Interacts (via phosphorylated form) with 14-3-3 proteins; these interactions promote exclusion of ZFP36 from cytoplasmic stress granules in response to arsenite treatment in a MAPKAPK2-dependent manner and does not prevent CCR4-NOT deadenylase complex recruitment or ZFP36-induced ARE-containing mRNA deadenylation and decay processes. Interacts with 14-3-3 proteins; these interactions occur in response to rapamycin in an Akt-dependent manner. Interacts with AGO2 and AGO4. Interacts (via C-terminus) with CNOT1; this interaction occurs in a RNA-independent manner and induces mRNA deadenylation. Interacts (via N-terminus) with CNOT6. Interacts with CNOT6L. Interacts (via C-terminus) with CNOT7; this interaction occurs in a RNA-independent manner, induces mRNA deadenylation and is inhibited in a phosphorylation MAPKAPK2-dependent manner. Interacts (via unphosphorylated form) with CNOT8; this interaction occurs in a RNA-independent manner and is inhibited in a phosphorylation MAPKAPK2-dependent manner. Interacts with DCP1A. Interacts (via N-terminus) with DCP2. Interacts with EDC3. Interacts (via N-terminus) with EXOSC2. Interacts with heat shock 70 kDa proteins. Interacts with KHSRP; this interaction increases upon cytokine-induced treatment. Interacts with MAP3K4; this interaction enhances the association with SH3KBP1/CIN85. Interacts with MAPKAPK2; this interaction occurs upon skeletal muscle satellite cell activation. Interacts with NCL. Interacts with NUP214; this interaction increases upon lipopolysaccharide (LPS) stimulation. Interacts with PABPC1; this interaction occurs in a RNA-dependent manner. Interacts (via hypophosphorylated form) with PABPN1 (via RRM domain and C-terminal arginine-rich region); this interaction occurs in the nucleus in a RNA-independent manner, decreases in presence of single-stranded poly(A) RNA-oligomer and in a p38 MAPK-dependent-manner and inhibits nuclear poly(A) tail synthesis. Interacts with PAN2. Interacts (via C3H1-type zinc finger domains) with PKM. Interacts (via C3H1-type zinc finger domains) with nuclear RNA poly(A) polymerase. Interacts with PPP2CA; this interaction occurs in LPS-stimulated cells and induces ZFP36 dephosphorylation, and hence may promote ARE-containing mRNAs decay. Interacts (via C-terminus) with PRR5L (via C-terminus); this interaction may accelerate ZFP36-mediated mRNA decay during stress. Interacts (via C-terminus) with SFN; this interaction occurs in a phosphorylation-dependent manner. Interacts (via extreme C-terminal region) with SH3KBP1/CIN85 (via SH3 domains); this interaction enhances MAP3K4-induced phosphorylation of ZFP36 at Ser-58 and Ser-85 and does not alter neither ZFP36 binding to ARE-containing transcripts nor TNF-alpha mRNA decay. Interacts with XRN1. Interacts (via C-terminus and Ser-178 phosphorylated form) with YWHAB; this interaction occurs in a p38/MAPKAPK2-dependent manner, increases cytoplasmic localization of ZFP36 and protects ZFP36 from Ser-178 dephosphorylation by serine/threonine phosphatase 2A, and hence may be crucial for stabilizing ARE-containing mRNAs. Interacts (via phosphorylated form) with YWHAE. Interacts (via C-terminus) with YWHAG; this interaction occurs in a phosphorylation-dependent manner. Interacts with YWHAH; this interaction occurs in a phosphorylation-dependent manner. Interacts with YWHAQ; this interaction occurs in a phosphorylation-dependent manner. Interacts with (via C-terminus) YWHAZ; this interaction occurs in a phosphorylation-dependent manner. Does not interact with SH3KBP1. Interacts (via the 4EHP-binding motif) with EIF4E2; the interaction is direct. Interacts (via P-P-P-P-G repeats) with GIGYF2; the interaction is direct. In terms of processing, phosphorylated. Phosphorylation at serine and/or threonine residues occurs in a p38 MAPK- and MAPKAPK2-dependent manner. Phosphorylated by MAPKAPK2 at Ser-52 and Ser-178; phosphorylation increases its stability and cytoplasmic localization, promotes binding to 14-3-3 adapter proteins and inhibits the recruitment of cytoplasmic CCR4-NOT and PAN2-PAN3 deadenylase complexes to the mRNA decay machinery, thereby inhibiting ZFP36-induced ARE-containing mRNA deadenylation and decay processes. Phosphorylation by MAPKAPK2 does not impair ARE-containing RNA-binding. Phosphorylated in a MAPKAPK2- and p38 MAPK-dependent manner upon skeletal muscle satellite cell activation; this phosphorylation inhibits ZFP36-mediated mRNA decay activity, and hence stabilizes MYOD1 mRNA. Phosphorylated by MAPK1 upon mitogen stimulation. Phosphorylated at Ser-58 and Ser-85; these phosphorylations increase in a SH3KBP1-dependent manner. Phosphorylated at serine and threonine residues in a pyruvate kinase PKM- and p38 MAPK-dependent manner. Phosphorylation at Ser-52 may participate in the PKM-mediated degradation of ZFP36 in a p38 MAPK-dependent manner. Dephosphorylated by serine/threonine phosphatase 2A at Ser-178. Ubiquitinated; pyruvate kinase (PKM)-dependent ubiquitination leads to proteasomal degradation through a p38 MAPK signaling pathway. Expressed in skeletal muscle satellite cells. Strongly expressed in differentiated adipocytes compared to preadipocytes (at protein level). Expressed in embryonic stem cells (ESCs). Expressed in heart, placenta, kidney, intestine, liver, lung, thymus, fat and spleen.

It is found in the nucleus. The protein resides in the cytoplasm. The protein localises to the cytoplasmic granule. Its subcellular location is the P-body. Functionally, zinc-finger RNA-binding protein that destabilizes numerous cytoplasmic AU-rich element (ARE)-containing mRNA transcripts by promoting their poly(A) tail removal or deadenylation, and hence provide a mechanism for attenuating protein synthesis. Acts as an 3'-untranslated region (UTR) ARE mRNA-binding adapter protein to communicate signaling events to the mRNA decay machinery. Recruits deadenylase CNOT7 (and probably the CCR4-NOT complex) via association with CNOT1, and hence promotes ARE-mediated mRNA deadenylation. Also functions by recruiting components of the cytoplasmic RNA decay machinery to the bound ARE-containing mRNAs. Self-regulates by destabilizing its own mRNA. Binds to 3'-UTR ARE of numerous mRNAs and of its own mRNA. Plays a role in anti-inflammatory responses; suppresses tumor necrosis factor (TNF)-alpha production by stimulating ARE-mediated TNF-alpha mRNA decay and several other inflammatory ARE-containing mRNAs in interferon (IFN)- and/or lipopolysaccharide (LPS)-induced macrophages. Also plays a role in the regulation of dendritic cell maturation at the post-transcriptional level, and hence operates as part of a negative feedback loop to limit the inflammatory response. Promotes ARE-mediated mRNA decay of hypoxia-inducible factor HIF1A mRNA during the response of endothelial cells to hypoxia. Positively regulates early adipogenesis of preadipocytes by promoting ARE-mediated mRNA decay of immediate early genes (IEGs). Negatively regulates hematopoietic/erythroid cell differentiation by promoting ARE-mediated mRNA decay of the transcription factor STAT5B mRNA. Plays a role in maintaining skeletal muscle satellite cell quiescence by promoting ARE-mediated mRNA decay of the myogenic determination factor MYOD1 mRNA. Also associates with and regulates the expression of non-ARE-containing target mRNAs at the post-transcriptional level, such as MHC class I mRNAs. Participates in association with argonaute RISC catalytic components in the ARE-mediated mRNA decay mechanism; assists microRNA (miRNA) targeting ARE-containing mRNAs. May also play a role in the regulation of cytoplasmic mRNA decapping; enhances decapping of ARE-containing RNAs, in vitro. Involved in the delivery of target ARE-mRNAs to processing bodies (PBs). In addition to its cytosolic mRNA-decay function, affects nuclear pre-mRNA processing. Negatively regulates nuclear poly(A)-binding protein PABPN1-stimulated polyadenylation activity on ARE-containing pre-mRNA during LPS-stimulated macrophages. Also involved in the regulation of stress granule (SG) and P-body (PB) formation and fusion. Plays a role in the regulation of keratinocyte proliferation, differentiation and apoptosis. Plays a role as a tumor suppressor by inhibiting cell proliferation in breast cancer cells. This is mRNA decay activator protein ZFP36 from Mus musculus (Mouse).